We begin with the raw amino-acid sequence, 327 residues long: Transaldolase (327 aa).

The Schiff-base intermediate with substrate role is filled by lysine 132.

It belongs to the transaldolase family. Type 1 subfamily.

The protein resides in the cytoplasm. It carries out the reaction D-sedoheptulose 7-phosphate + D-glyceraldehyde 3-phosphate = D-erythrose 4-phosphate + beta-D-fructose 6-phosphate. The protein operates within carbohydrate degradation; pentose phosphate pathway; D-glyceraldehyde 3-phosphate and beta-D-fructose 6-phosphate from D-ribose 5-phosphate and D-xylulose 5-phosphate (non-oxidative stage): step 2/3. Functionally, transaldolase is important for the balance of metabolites in the pentose-phosphate pathway. This is Transaldolase from Chlamydia pneumoniae (Chlamydophila pneumoniae).